The primary structure comprises 81 residues: Short neurotoxin 1 (81 aa).

Residues 1–21 (MKTLLLTLVVVTIVFLDLGYT) form the signal peptide. 4 cysteine pairs are disulfide-bonded: Cys24/Cys43, Cys38/Cys60, Cys62/Cys73, and Cys74/Cys79.

Belongs to the three-finger toxin family. Short-chain subfamily. Type I alpha-neurotoxin sub-subfamily. As to expression, expressed by the venom gland.

The protein resides in the secreted. Binds to muscle nicotinic acetylcholine receptor (nAChR) and inhibit acetylcholine from binding to the receptor, thereby impairing neuromuscular transmission. The chain is Short neurotoxin 1 from Notechis scutatus scutatus (Mainland tiger snake).